Here is a 535-residue protein sequence, read N- to C-terminus: Methylmalonate-semialdehyde/malonate-semialdehyde dehydrogenase [acylating], mitochondrial (535 aa).

The N-terminal 32 residues, M1 to F32, are a transit peptide targeting the mitochondrion. K47, K52, K55, and K76 each carry N6-acetyllysine; alternate. 4 positions are modified to N6-succinyllysine; alternate: K47, K52, K55, and K76. K87 carries the post-translational modification N6-acetyllysine. N6-acetyllysine; alternate is present on residues K117 and K129. An N6-succinyllysine; alternate mark is found at K117 and K129. Residues A183, F185, K209, E212, R213, and S262 each coordinate NAD(+). S262 is modified (phosphoserine). N6-acetyllysine is present on K298. The active-site Nucleophile is C317. 2 positions are modified to N6-acetyllysine: K330 and K331. N6-acetyllysine; alternate is present on residues K364 and K376. Residues K364 and K376 each carry the N6-succinyllysine; alternate modification. Position 380 is a phosphoserine (S380). At K391 the chain carries N6-succinyllysine. E417 lines the NAD(+) pocket. An N6-acetyllysine modification is found at K500. K517 is modified (N6-succinyllysine).

This sequence belongs to the aldehyde dehydrogenase family. In terms of assembly, homotetramer. In terms of tissue distribution, expressed in the head and flagellum of epididymal sperm but not in testicular sperm (at protein level). Kidney &gt; liver &gt; heart &gt; muscle &gt; brain.

The protein resides in the mitochondrion. The catalysed reaction is 3-oxopropanoate + NAD(+) + CoA + H2O = hydrogencarbonate + acetyl-CoA + NADH + H(+). It carries out the reaction 2-methyl-3-oxopropanoate + NAD(+) + CoA + H2O = propanoyl-CoA + hydrogencarbonate + NADH + H(+). The enzyme catalyses (R)-2-methyl-3-oxopropanoate + NAD(+) + CoA + H2O = propanoyl-CoA + hydrogencarbonate + NADH + H(+). It catalyses the reaction (S)-2-methyl-3-oxopropanoate + NAD(+) + CoA + H2O = propanoyl-CoA + hydrogencarbonate + NADH + H(+). Its function is as follows. Malonate and methylmalonate semialdehyde dehydrogenase involved in the catabolism of valine, thymine, and compounds catabolized by way of beta-alanine, including uracil and cytidine. This Rattus norvegicus (Rat) protein is Methylmalonate-semialdehyde/malonate-semialdehyde dehydrogenase [acylating], mitochondrial.